The primary structure comprises 167 residues: Phosphopantetheine adenylyltransferase (167 aa).

T10 is a binding site for substrate. Residues 10-11 (TF) and H18 each bind ATP. K42, L75, and R89 together coordinate substrate. ATP contacts are provided by residues 90-92 (GVR), E100, and 125-131 (YTYVASS).

Belongs to the bacterial CoaD family. Homohexamer. Requires Mg(2+) as cofactor.

The protein resides in the cytoplasm. The enzyme catalyses (R)-4'-phosphopantetheine + ATP + H(+) = 3'-dephospho-CoA + diphosphate. Its pathway is cofactor biosynthesis; coenzyme A biosynthesis; CoA from (R)-pantothenate: step 4/5. Its function is as follows. Reversibly transfers an adenylyl group from ATP to 4'-phosphopantetheine, yielding dephospho-CoA (dPCoA) and pyrophosphate. This chain is Phosphopantetheine adenylyltransferase, found in Chlorobium phaeobacteroides (strain DSM 266 / SMG 266 / 2430).